A 603-amino-acid chain; its full sequence is Elongation factor 4 (603 aa).

In terms of domain architecture, tr-type G spans 2 to 184 (NHIRNFSIIA…AIVHKMPAPR (183 aa)). GTP is bound by residues 14-19 (DHGKST) and 131-134 (NKMD).

Belongs to the TRAFAC class translation factor GTPase superfamily. Classic translation factor GTPase family. LepA subfamily.

Its subcellular location is the cell inner membrane. It catalyses the reaction GTP + H2O = GDP + phosphate + H(+). Required for accurate and efficient protein synthesis under certain stress conditions. May act as a fidelity factor of the translation reaction, by catalyzing a one-codon backward translocation of tRNAs on improperly translocated ribosomes. Back-translocation proceeds from a post-translocation (POST) complex to a pre-translocation (PRE) complex, thus giving elongation factor G a second chance to translocate the tRNAs correctly. Binds to ribosomes in a GTP-dependent manner. The polypeptide is Elongation factor 4 (Variovorax paradoxus (strain S110)).